Consider the following 37-residue polypeptide: Cytochrome b6-f complex subunit 5 (37 aa).

The helical transmembrane segment at 5–25 (LLSGIVLGLIVVTLAGLFYAA) threads the bilayer.

This sequence belongs to the PetG family. In terms of assembly, the 4 large subunits of the cytochrome b6-f complex are cytochrome b6, subunit IV (17 kDa polypeptide, PetD), cytochrome f and the Rieske protein, while the 4 small subunits are PetG, PetL, PetM and PetN. The complex functions as a dimer.

Its subcellular location is the cellular thylakoid membrane. In terms of biological role, component of the cytochrome b6-f complex, which mediates electron transfer between photosystem II (PSII) and photosystem I (PSI), cyclic electron flow around PSI, and state transitions. PetG is required for either the stability or assembly of the cytochrome b6-f complex. In Anabaena variabilis, this protein is Cytochrome b6-f complex subunit 5.